The primary structure comprises 770 residues: Kinesin-like protein klpA (770 aa).

Residues 1-152 (MENVQSRMQG…GLGKRGEWDQ (152 aa)) form a disordered region. Over residues 85 to 105 (SSTLTRSASAASRPRGPLSSS) the composition is skewed to low complexity. The segment covering 106 to 119 (TSGRPKTSMSTSRR) has biased composition (polar residues). Over residues 134–152 (THQEERSYGGLGKRGEWDQ) the composition is skewed to basic and acidic residues. Residues 175 to 425 (QESSGLKDAL…QELKGNIRVF (251 aa)) adopt a coiled-coil conformation. The 336-residue stretch at 421-756 (NIRVFCRVRP…LKFATKVHNT (336 aa)) folds into the Kinesin motor domain. Residue 514-521 (GQTGSGKT) coordinates ATP.

It belongs to the TRAFAC class myosin-kinesin ATPase superfamily. Kinesin family. NCD subfamily.

The protein localises to the cytoplasm. Its subcellular location is the cytoskeleton. The chain is Kinesin-like protein klpA (klpA) from Emericella nidulans (strain FGSC A4 / ATCC 38163 / CBS 112.46 / NRRL 194 / M139) (Aspergillus nidulans).